The sequence spans 71 residues: Putative membrane protein insertion efficiency factor (71 aa).

The protein belongs to the UPF0161 family.

Its subcellular location is the cell membrane. Could be involved in insertion of integral membrane proteins into the membrane. This is Putative membrane protein insertion efficiency factor from Clostridium acetobutylicum (strain ATCC 824 / DSM 792 / JCM 1419 / IAM 19013 / LMG 5710 / NBRC 13948 / NRRL B-527 / VKM B-1787 / 2291 / W).